A 699-amino-acid chain; its full sequence is Conditioned medium factor (699 aa).

The N-terminal stretch at 1 to 18 (MRLLLLLILIITINFSYG) is a signal peptide. N-linked (GlcNAc...) asparagine glycans are attached at residues asparagine 130, asparagine 283, asparagine 346, and asparagine 430. The disordered stretch occupies residues 680–699 (SPQQTTNTEYNKEMSSNSVW).

N- and O-glycosylated. In terms of processing, the N-terminus is blocked.

Involved in cell density sensing and might synchronize the onset of development by triggering aggregation when a majority of the cells in a given area have starved. This Dictyostelium discoideum (Social amoeba) protein is Conditioned medium factor (cmfA).